Reading from the N-terminus, the 313-residue chain is Putative S-adenosyl-L-methionine-dependent methyltransferase MAV_5149 (313 aa).

S-adenosyl-L-methionine is bound by residues Asp-135 and 164–165; that span reads DL.

The protein belongs to the UPF0677 family.

Functionally, exhibits S-adenosyl-L-methionine-dependent methyltransferase activity. The protein is Putative S-adenosyl-L-methionine-dependent methyltransferase MAV_5149 of Mycobacterium avium (strain 104).